Consider the following 245-residue polypeptide: tRNA pseudouridine synthase A (245 aa).

The active-site Nucleophile is the aspartate 52. Tyrosine 111 contacts substrate.

The protein belongs to the tRNA pseudouridine synthase TruA family. Homodimer.

It carries out the reaction uridine(38/39/40) in tRNA = pseudouridine(38/39/40) in tRNA. In terms of biological role, formation of pseudouridine at positions 38, 39 and 40 in the anticodon stem and loop of transfer RNAs. This Thermotoga petrophila (strain ATCC BAA-488 / DSM 13995 / JCM 10881 / RKU-1) protein is tRNA pseudouridine synthase A.